The sequence spans 240 residues: Nudix hydrolase 3 (240 aa).

Residues 50-190 (NSAMSVLIPL…RMKYTLPSFD (141 aa)) form the Nudix hydrolase domain. Residues 89–110 (GRMDPGETTTETALRETFEEIG) carry the Nudix box motif. Positions 104 and 108 each coordinate Mg(2+).

The protein belongs to the Nudix hydrolase family. PCD1 subfamily. The cofactor is Mn(2+). Mg(2+) serves as cofactor.

In terms of biological role, probably mediates the hydrolysis of some nucleoside diphosphate derivatives. The protein is Nudix hydrolase 3 (ndx-3) of Caenorhabditis elegans.